We begin with the raw amino-acid sequence, 478 residues long: MDDDNGLELSLGLSLGGSSGKAKARDAPLEPKAEPQVEESSSKGGLQTPDAPSGKFYQKSADNHEQNSKQRHSPVAPQFGNFWGQPGNSSGPVVDGSVEPVSHQPQLSSYQDGRMPINSGNNSEEQKPVSGNHKLPSEEMNFQKKHQTASDQPDAFSKSSDGGAKNAPISISTDDGSTGENEDVAESEAEGSNSWLVAQREDSAKGSVVNKGSDRKRSADAAADGFKGKRQPSFSGSESSSGKLTPGNLISMQASNVVALPYQVPGQVSGPPVLTNAPNFHPVCTVQLRPPTNGGLAVQTMGSASQVAFGYPAVQLPTLETGSSWAFGAPPQALSSFTAKDKADQTGTKQVDDGKKPQEAGASSSAHAEDEKKADRGLSLMGSAIRPGIAPNVKFGGSGSYPDLPWVSTIGAGPNGRTISGVTYKFGRNEVKIVCACHGTHMSPEEFMRHASADAPAQDNSATLPAFPAGNQATSAEN.

Disordered regions lie at residues 1–247 (MDDD…LTPG), 337–374 (FTAK…EKKA), and 454–478 (DAPA…SAEN). A compositionally biased stretch (basic and acidic residues) spans 23–35 (KARDAPLEPKAEP). A compositionally biased stretch (polar residues) spans 169–179 (ISISTDDGSTG). The segment covering 180 to 189 (ENEDVAESEA) has biased composition (acidic residues). A compositionally biased stretch (low complexity) spans 233–242 (SFSGSESSSG). Basic and acidic residues predominate over residues 339–358 (AKDKADQTGTKQVDDGKKPQ).

It belongs to the Ninja family.

It localises to the nucleus. In Zea mays (Maize), this protein is Ninja-family protein 8.